The sequence spans 122 residues: Large ribosomal subunit protein uL14 (122 aa).

The protein belongs to the universal ribosomal protein uL14 family. In terms of assembly, part of the 50S ribosomal subunit. Forms a cluster with proteins L3 and L19. In the 70S ribosome, L14 and L19 interact and together make contacts with the 16S rRNA in bridges B5 and B8.

Functionally, binds to 23S rRNA. Forms part of two intersubunit bridges in the 70S ribosome. This chain is Large ribosomal subunit protein uL14, found in Thermotoga petrophila (strain ATCC BAA-488 / DSM 13995 / JCM 10881 / RKU-1).